Consider the following 422-residue polypeptide: Histidine--tRNA ligase (422 aa).

The protein belongs to the class-II aminoacyl-tRNA synthetase family. Homodimer.

The protein resides in the cytoplasm. The catalysed reaction is tRNA(His) + L-histidine + ATP = L-histidyl-tRNA(His) + AMP + diphosphate + H(+). The polypeptide is Histidine--tRNA ligase (Vibrio parahaemolyticus serotype O3:K6 (strain RIMD 2210633)).